Consider the following 330-residue polypeptide: o-succinylbenzoate synthase (330 aa).

Lys130 functions as the Proton donor in the catalytic mechanism. Residues Asp155, Glu184, and Asp206 each contribute to the Mg(2+) site. The Proton acceptor role is filled by Lys228.

Belongs to the mandelate racemase/muconate lactonizing enzyme family. MenC type 1 subfamily. In terms of assembly, monomer. The cofactor is a divalent metal cation.

It catalyses the reaction (1R,6R)-6-hydroxy-2-succinyl-cyclohexa-2,4-diene-1-carboxylate = 2-succinylbenzoate + H2O. The protein operates within quinol/quinone metabolism; 1,4-dihydroxy-2-naphthoate biosynthesis; 1,4-dihydroxy-2-naphthoate from chorismate: step 4/7. It functions in the pathway cofactor biosynthesis; phylloquinone biosynthesis. Converts 2-succinyl-6-hydroxy-2,4-cyclohexadiene-1-carboxylate (SHCHC) to 2-succinylbenzoate (OSB). Does not show N-succinylamino acid racemase (NSAR) activity with N-succinyl-L-phenylglycine as substrate. In Bdellovibrio bacteriovorus (strain ATCC 15356 / DSM 50701 / NCIMB 9529 / HD100), this protein is o-succinylbenzoate synthase.